We begin with the raw amino-acid sequence, 125 residues long: Large ribosomal subunit protein bL12 (125 aa).

The protein belongs to the bacterial ribosomal protein bL12 family. As to quaternary structure, homodimer. Part of the ribosomal stalk of the 50S ribosomal subunit. Forms a multimeric L10(L12)X complex, where L10 forms an elongated spine to which 2 to 4 L12 dimers bind in a sequential fashion. Binds GTP-bound translation factors.

Forms part of the ribosomal stalk which helps the ribosome interact with GTP-bound translation factors. Is thus essential for accurate translation. In Cereibacter sphaeroides (strain ATCC 17023 / DSM 158 / JCM 6121 / CCUG 31486 / LMG 2827 / NBRC 12203 / NCIMB 8253 / ATH 2.4.1.) (Rhodobacter sphaeroides), this protein is Large ribosomal subunit protein bL12.